Reading from the N-terminus, the 508-residue chain is MPSMLERISKNLVKEIGSKDLTPVKYLLSATKLRQFVILRKKKDSRSSFWEQSDYVPVEFSLNDILEPSSSVLETVVTGPFHFSDIMIQKHKADMGVNVGIEVSVSGEASVDHGCSLEFQIVTIPSPNLEDFQKRKLLDPEPSFLKECRRRGDNLYVVTEAVELINNTVLYDSSSVNILGKIALWITYGKGQGQGESLRVKKKALTLQKGMVMAYKRKQLVIKEKAILISDDDEQRTFQDEYEISEMVGYCAARSEGLLPSFHTISPTLFNASSNDMKLKPELFLTQQFLSGHLPKYEQVHILPVGRIEEPFWQNFKHLQEEVFQKIKTLAQLSKDVQDVMFYSILAMLRDRGALQDLMNMLELDSSGHLDGPGGAILKKLQQDSNHAWFNPKDPILYLLEAIMVLSDFQHDLLACSMEKRILLQQQELVRSILEPNFRYPWSIPFTLKPELLAPLQSEGLAITYGLLEECGLRMELDNPRSTWDVEAKMPLSALYGTLSLLQQLAEA.

A triggers pyroptosis region spans residues 1 to 257 (MPSMLERISK…VGYCAARSEG (257 aa)).

Belongs to the gasdermin family. As to quaternary structure, homooligomer; homooligomeric ring-shaped pore complex containing 27-28 subunits when inserted in the membrane. In terms of processing, cleavage by CASP8 relieves autoinhibition by releasing the N-terminal moiety (Gasdermin-C, N-terminal) that initiates pyroptosis. The cleavage site is unclear. According to a publication, it takes place after Asp-240 in response to alpha-ketoglutarate. Another paper reports cleavage by CASP8 after Asp-365. Post-translationally, palmitoylated. In terms of tissue distribution, expressed mainly in trachea and spleen. In the esophagus, expressed in differentiating cells and probably in differentiated cells. Also detected in gastric epithelium.

It localises to the cytoplasm. Its subcellular location is the cytosol. The protein localises to the cell membrane. Its activity is regulated as follows. The full-length protein before cleavage is inactive: intramolecular interactions between N- and C-terminal domains mediate autoinhibition in the absence of activation signal. The intrinsic pyroptosis-inducing activity is carried by the released N-terminal moiety (Gasdermin-C, N-terminal) following cleavage by caspase CASP8. This form constitutes the precursor of the pore-forming protein: upon cleavage, the released N-terminal moiety (Gasdermin-C, N-terminal) binds to membranes and forms pores, triggering pyroptosis. In terms of biological role, pore-forming protein that causes membrane permeabilization and pyroptosis. Produced by the cleavage of gasdermin-C by caspase CASP8 in response to death signals. After cleavage, moves to the plasma membrane where it strongly binds to membrane inner leaflet lipids. Homooligomerizes within the membrane and forms pores of 10-15 nanometers (nm) of inner diameter, triggering pyroptosis. The sequence is that of Gasdermin-C from Homo sapiens (Human).